A 178-amino-acid polypeptide reads, in one-letter code: ATP synthase subunit b (178 aa).

Residues 19–39 traverse the membrane as a helical segment; sequence ITGIGFVILLFIAIKYIVPAF.

Belongs to the ATPase B chain family. F-type ATPases have 2 components, F(1) - the catalytic core - and F(0) - the membrane proton channel. F(1) has five subunits: alpha(3), beta(3), gamma(1), delta(1), epsilon(1). F(0) has three main subunits: a(1), b(2) and c(10-14). The alpha and beta chains form an alternating ring which encloses part of the gamma chain. F(1) is attached to F(0) by a central stalk formed by the gamma and epsilon chains, while a peripheral stalk is formed by the delta and b chains.

It is found in the cell membrane. In terms of biological role, f(1)F(0) ATP synthase produces ATP from ADP in the presence of a proton or sodium gradient. F-type ATPases consist of two structural domains, F(1) containing the extramembraneous catalytic core and F(0) containing the membrane proton channel, linked together by a central stalk and a peripheral stalk. During catalysis, ATP synthesis in the catalytic domain of F(1) is coupled via a rotary mechanism of the central stalk subunits to proton translocation. Functionally, component of the F(0) channel, it forms part of the peripheral stalk, linking F(1) to F(0). The polypeptide is ATP synthase subunit b (Kocuria rhizophila (strain ATCC 9341 / DSM 348 / NBRC 103217 / DC2201)).